Consider the following 369-residue polypeptide: MSDLEQLERQILEDIAAAVDEQGIEAVRVAALGKKGTVSEKLKTLGGMSPEERQMQGPAINGLKNRVTEALSERRTELRKAAVAARLEREKVDVTLPVRESAASRGRIHPISQVIDEITAIFADMGFSIAEGPDIETDYYNFTALNFPEGHPAREMHDTFFFNPDEKGERKLLRTHTSPVQVHTMEKFAAMRDKEGRDEPIRIVIPGKTYRMDSDATHSPMFHQVEGLVVDKSANVANMKWVLEEFCKAFFEVPSVKMRMRPSFFPFTEPSVEVDIQCDRSGPHVKFGEGNDWLEILGCGMVHPNVLRMSGYDPEVYQGFAWGMGIDRIAMLKYGMPDLRAFFDADVRWIEHYGFRPLDIPTLFGGLSA.

A Mg(2+)-binding site is contributed by Glu-269.

The protein belongs to the class-II aminoacyl-tRNA synthetase family. Phe-tRNA synthetase alpha subunit type 1 subfamily. Tetramer of two alpha and two beta subunits. It depends on Mg(2+) as a cofactor.

Its subcellular location is the cytoplasm. The catalysed reaction is tRNA(Phe) + L-phenylalanine + ATP = L-phenylalanyl-tRNA(Phe) + AMP + diphosphate + H(+). The protein is Phenylalanine--tRNA ligase alpha subunit of Brucella abortus (strain 2308).